The primary structure comprises 700 residues: Putative cysteine-rich receptor-like protein kinase 30 (700 aa).

The N-terminal stretch at 1 to 24 (MRQNNLFSLIFWLVPVSLIIVVSA) is a signal peptide. Gnk2-homologous domains are found at residues 25 to 129 (QLCS…NQPS) and 135 to 250 (LESV…LYPF). The Extracellular portion of the chain corresponds to 25–285 (QLCSEKFGTF…KDEKTIHTGT (261 aa)). N-linked (GlcNAc...) asparagine glycosylation is found at asparagine 63, asparagine 105, asparagine 146, asparagine 150, and asparagine 191. Residues 286-306 (IIGIVIVVAMVIIMALLALGV) form a helical membrane-spanning segment. The Cytoplasmic portion of the chain corresponds to 307–700 (SVCRSRKKYQ…SKSMYRNTED (394 aa)). The Protein kinase domain maps to 346–626 (FLASNKIGQG…IFQMLTNSSI (281 aa)). ATP-binding positions include 352 to 360 (IGQGGFGEV) and lysine 374. Aspartate 474 functions as the Proton acceptor in the catalytic mechanism. Serine 478 carries the post-translational modification Phosphoserine. Threonine 514 bears the Phosphothreonine mark. Residue tyrosine 522 is modified to Phosphotyrosine.

This sequence belongs to the protein kinase superfamily. Ser/Thr protein kinase family. CRK subfamily.

Its subcellular location is the membrane. It catalyses the reaction L-seryl-[protein] + ATP = O-phospho-L-seryl-[protein] + ADP + H(+). The catalysed reaction is L-threonyl-[protein] + ATP = O-phospho-L-threonyl-[protein] + ADP + H(+). This chain is Putative cysteine-rich receptor-like protein kinase 30 (CRK30), found in Arabidopsis thaliana (Mouse-ear cress).